Consider the following 424-residue polypeptide: Zygote arrest protein 1 (424 aa).

Disordered regions lie at residues 125–175 and 196–313; these read RTLQ…PMRF and GPGP…SPEL. The span at 141-150 shows a compositional bias: gly residues; sequence GAEGTTGGGS. Residues 289–298 show a composition bias toward basic and acidic residues; it reads RARDGGDGRE. The 3CxxC-type zinc-finger motif lies at 326–409; the sequence is KYGYYHCKDC…RQDLCGRCKG (84 aa).

It belongs to the ZAR1 family. Interacts with YBX2. In terms of processing, ubiquitinated and degradaded by the proteasome during oocyte meiotic maturation, leading to MARDO (mitochondria-associated ribonucleoprotein domain) membraneless compartment dissolution. Ovary and testis.

It localises to the cytoplasm. The protein resides in the cytoplasmic ribonucleoprotein granule. Its function is as follows. mRNA-binding protein that mediates formation of MARDO (mitochondria-associated ribonucleoprotein domain), a membraneless compartment that stores maternal mRNAs in oocytes. MARDO assembly around mitochondria is directed by an increase in mitochondrial membrane potential during oocyte growth. Promotes formation of MARDO phase-separated membraneless compartment by undergoing liquid-liquid phase separation upon binding to maternal mRNAs. Binds to the 3'-UTR of maternal mRNAs. Maternal mRNAs stored in the MARDO are translationally repressed. Essential for female fertility and oocyte-to-embryo transition by coordinating maternal mRNA storage, translation and degradation. The chain is Zygote arrest protein 1 from Homo sapiens (Human).